The following is a 159-amino-acid chain: Heterocyst differentiation protein HetP (159 aa).

The segment at 1-50 (MNQNTTGITNYNKAINPQQFDKVVEAILAGKYSWACVLMLRFAGYNPMHY) is required to complement a hetP deletion.

Belongs to the HetP family. As to quaternary structure, in bacterial two-hybrid assays interacts weakly with Asl1930, Alr2902 and Alr3234.

Promotes heterocyst differentiation and commitment when nitrogen is limiting. Interplay between the 4 HetP paralogs controls the timing of commitment to heterocyst formation and its duration. Epistatic analysis show that the 3 paralogs act upstream of hetP to delay commitment (asl1930, alr3234) or inhibit development (alr2902). Asl1930 and Alr3234 must also attenuate the activity of Alr2902. Required for heterocyst formation. Functions directly downstream of master regulator HetR to promote heterocyst differentiation, functioning downstream of patterning (cell choice). Partially functionally redundant with homologs alr2902 and asl1930 but not alr3234. Overexpression leads to more than wild-type levels of heterocysts. Overexpression in the absence of hetR partially bypasses hetR deletion, allowing differentiation of heterocysts, although they only fix nitrogen in the absence of oxygen (a Fox- Fix+ phenotype), suggesting they are not fully. The polypeptide is Heterocyst differentiation protein HetP (Nostoc sp. (strain PCC 7120 / SAG 25.82 / UTEX 2576)).